Reading from the N-terminus, the 289-residue chain is E3 ubiquitin-protein ligase MARCHF1 (289 aa).

The interval 1–66 is responsible for low stability; that stretch reads MLGWCEAIAR…SPTTGTAPRS (66 aa). A disordered region spans residues 13 to 69; the sequence is HRIPNNTRTPEISGDLADASQTSTLNEKSPGRSASRSSNISKASSPTTGTAPRSQSR. A compositionally biased stretch (low complexity) spans 43–58; it reads GRSASRSSNISKASSP. Residues 59–69 show a composition bias toward polar residues; sequence TTGTAPRSQSR. Residues 72-133 form an RING-CH-type zinc finger; sequence VCPSTQDICR…ELCKYDFIME (62 aa). Residues C80, C83, C97, C99, H107, C110, C123, and C126 each coordinate Zn(2+). The next 2 membrane-spanning stretches (helical) occupy residues 155–175 and 197–217; these read IFCS…SLYV and FWTK…FMYV. The interval 222 to 279 is responsible for down-regulation of CD86 and MHC class II cell surface expression; sequence YVQLWRRLKAYNRVIFVQNCPDTAKKLEKNFSCNVNTDIKDAVVVPVPQTGANSLPSA.

Interacts with CD83; this interaction antagonizes MARCHF1-mediated MHC II and CD86 down-regulation. Post-translationally, ubiquitinated via ubiquitin-conjugating enzyme E2 D1/UBE2D1 independently of lysines, leading to proteolytic degradation. In terms of processing, has a short half-life. Instability/short half-life permits rapid changes that allow efficient induction of antigen presentation once antigen presenting cells, APCs, receive maturation signals. Small changes in protein levels significantly alter the cell surface display of MHC class II proteins. In terms of tissue distribution, expressed in antigen presenting cells, APCs, located in lymph nodes and spleen. Also expressed in lung. Expression is high in follicular B-cells, moderate in dendritic cells and low in splenic T-cells.

The protein resides in the golgi apparatus. It localises to the trans-Golgi network membrane. It is found in the lysosome membrane. The protein localises to the cytoplasmic vesicle membrane. Its subcellular location is the late endosome membrane. The protein resides in the early endosome membrane. It localises to the cell membrane. It carries out the reaction S-ubiquitinyl-[E2 ubiquitin-conjugating enzyme]-L-cysteine + [acceptor protein]-L-lysine = [E2 ubiquitin-conjugating enzyme]-L-cysteine + N(6)-ubiquitinyl-[acceptor protein]-L-lysine.. It functions in the pathway protein modification; protein ubiquitination. Functionally, E3 ubiquitin-protein ligase that mediates ubiquitination of TFRC, CD86, FAS and MHC class II proteins, such as HLA-DR alpha and beta, and promotes their subsequent endocytosis and sorting to lysosomes via multivesicular bodies. By constitutively ubiquitinating MHC class II proteins in immature dendritic cells, down-regulates their cell surface localization thus sequestering them in the intracellular endosomal system. Also regulates insulin sensitivity by controlling surface expression of the insulin receptor subunit beta/INSR by direct ubiquitination and degradation. (Microbial infection) Plays a role in iron metabolism by regulating the levels of the transferrin receptor TFRC during human cytomegalovirus infection, subsequently contributing to a proviral effect. The chain is E3 ubiquitin-protein ligase MARCHF1 from Homo sapiens (Human).